A 412-amino-acid polypeptide reads, in one-letter code: Fringe glycosyltransferase (412 aa).

Residues 1–15 are Cytoplasmic-facing; that stretch reads MMSLTVLSPPQRFKR. Residues 16–34 form a helical; Signal-anchor for type II membrane protein membrane-spanning segment; that stretch reads ILQAMMLAVAVVYMTLLLY. Residues 35-412 are Lumenal-facing; sequence QSAYGYPGIQ…FPYFSFCPPR (378 aa). Arginine 164 is a substrate binding site. Intrachain disulfides connect cysteine 204-cysteine 215 and cysteine 233-cysteine 297. A substrate-binding site is contributed by aspartate 237. A Mn(2+)-binding site is contributed by aspartate 238. The active site involves aspartate 327. Histidine 351 serves as a coordination point for Mn(2+). Cysteine 400 and cysteine 409 are oxidised to a cystine.

The protein belongs to the glycosyltransferase 31 family. It depends on Mn(2+) as a cofactor. As to expression, expressed in dorsal cells.

It localises to the golgi apparatus membrane. The catalysed reaction is 3-O-(alpha-L-fucosyl)-L-threonyl-[EGF-like domain protein] + UDP-N-acetyl-alpha-D-glucosamine = 3-O-(N-acetyl-beta-D-glucosaminyl-(1-&gt;3)-alpha-L-fucosyl)-L-threonyl-[EGF-like domain protein] + UDP + H(+). It catalyses the reaction 3-O-(alpha-L-fucosyl)-L-seryl-[EGF-like domain protein] + UDP-N-acetyl-alpha-D-glucosamine = 3-O-(N-acetyl-beta-D-glucosaminyl-(1-&gt;3)-alpha-L-fucosyl)-L-seryl-[EGF-like domain protein] + UDP + H(+). Functionally, glycosyltransferase involved in the elongation of O-linked ligands to activate Notch signaling. Possesses fucose-specific beta-1,3-N-acetylglucosaminyltransferase activity; extends the O-linked fucose on the Notch EGF repeats. Boundary-specific cell-signaling molecule that is responsible for dorsal-ventral cell interactions during wing development. The chain is Fringe glycosyltransferase (fng) from Drosophila melanogaster (Fruit fly).